Reading from the N-terminus, the 849-residue chain is Coiled-coil domain-containing protein 87 (849 aa).

A coiled-coil region spans residues 387–415; the sequence is RHPAAGHRLEELEKMLRNLQEEEASGQWD.

The protein belongs to the CCDC87 family.

Plays a role in spermatogenesis, where it is important for normal sperm head morphology. Also required for the acrosome reaction and thus normal male fertility. In Homo sapiens (Human), this protein is Coiled-coil domain-containing protein 87 (CCDC87).